Here is a 1383-residue protein sequence, read N- to C-terminus: DNA-directed RNA polymerase subunit beta'' (1383 aa).

Residues cysteine 220, cysteine 289, cysteine 296, and cysteine 299 each coordinate Zn(2+).

It belongs to the RNA polymerase beta' chain family. RpoC2 subfamily. In terms of assembly, in plastids the minimal PEP RNA polymerase catalytic core is composed of four subunits: alpha, beta, beta', and beta''. When a (nuclear-encoded) sigma factor is associated with the core the holoenzyme is formed, which can initiate transcription. Requires Zn(2+) as cofactor.

It localises to the plastid. The protein localises to the chloroplast. The catalysed reaction is RNA(n) + a ribonucleoside 5'-triphosphate = RNA(n+1) + diphosphate. DNA-dependent RNA polymerase catalyzes the transcription of DNA into RNA using the four ribonucleoside triphosphates as substrates. This chain is DNA-directed RNA polymerase subunit beta'', found in Oenothera argillicola (Appalachian evening primrose).